The chain runs to 333 residues: tRNA N6-adenosine threonylcarbamoyltransferase (333 aa).

Fe cation-binding residues include H118 and H122. Residues 140–144, D173, G186, and N274 contribute to the substrate site; that span reads VVSGG. Fe cation is bound at residue D298.

The protein belongs to the KAE1 / TsaD family. Fe(2+) serves as cofactor.

The protein localises to the cytoplasm. The enzyme catalyses L-threonylcarbamoyladenylate + adenosine(37) in tRNA = N(6)-L-threonylcarbamoyladenosine(37) in tRNA + AMP + H(+). Required for the formation of a threonylcarbamoyl group on adenosine at position 37 (t(6)A37) in tRNAs that read codons beginning with adenine. Is involved in the transfer of the threonylcarbamoyl moiety of threonylcarbamoyl-AMP (TC-AMP) to the N6 group of A37, together with TsaE and TsaB. TsaD likely plays a direct catalytic role in this reaction. The protein is tRNA N6-adenosine threonylcarbamoyltransferase of Deinococcus geothermalis (strain DSM 11300 / CIP 105573 / AG-3a).